A 280-amino-acid chain; its full sequence is Protoheme IX farnesyltransferase 2 (280 aa).

Transmembrane regions (helical) follow at residues 12-32 (VIWLLILASVAGYIYGGGGVD), 35-55 (LFSLLAVAFLSTGGSAAFNHY), 76-96 (LITPNAALAYSLALSATGISL), 98-118 (FLLLGLLPGLFVLLGWLFYAV), 129-149 (WLNIFGGGFAGNAVFLGGYAL), 158-178 (AVLISFAIYLWTPSHIWALAF), 199-221 (ERAVAVISAINAAAAAYILWLYL), 226-248 (GAGGAIVALGVAATIATSIYAAV), and 255-275 (MWKMYKASSPMLTLFLIALMI).

Belongs to the UbiA prenyltransferase family. Protoheme IX farnesyltransferase subfamily.

The protein localises to the cell membrane. The catalysed reaction is heme b + (2E,6E)-farnesyl diphosphate + H2O = Fe(II)-heme o + diphosphate. The protein operates within porphyrin-containing compound metabolism; heme O biosynthesis; heme O from protoheme: step 1/1. Its function is as follows. Converts heme B (protoheme IX) to heme O by substitution of the vinyl group on carbon 2 of heme B porphyrin ring with a hydroxyethyl farnesyl side group. The polypeptide is Protoheme IX farnesyltransferase 2 (Pyrobaculum aerophilum (strain ATCC 51768 / DSM 7523 / JCM 9630 / CIP 104966 / NBRC 100827 / IM2)).